The chain runs to 319 residues: Pantothenate kinase (319 aa).

An ATP-binding site is contributed by 101–108 (GSVAVGKS).

The protein belongs to the prokaryotic pantothenate kinase family.

The protein localises to the cytoplasm. The catalysed reaction is (R)-pantothenate + ATP = (R)-4'-phosphopantothenate + ADP + H(+). It participates in cofactor biosynthesis; coenzyme A biosynthesis; CoA from (R)-pantothenate: step 1/5. This Clavibacter sepedonicus (Clavibacter michiganensis subsp. sepedonicus) protein is Pantothenate kinase.